Here is a 173-residue protein sequence, read N- to C-terminus: Signal peptidase complex catalytic subunit SEC11 (173 aa).

The Cytoplasmic portion of the chain corresponds to 1–15 (MLGVSGMQPRQLAAQ). Residues 16-36 (ILNFALVLSTAFMMWKGLSVV) form a helical; Signal-anchor for type II membrane protein membrane-spanning segment. Topologically, residues 37–173 (SDSSSPIVVV…MGVMVVLQRE (137 aa)) are lumenal. Active-site charge relay system residues include S50, H89, and D115. Positions 159-170 (VMLGLMGVMVVL) are C-terminal short (CTS) helix.

Belongs to the peptidase S26B family. As to quaternary structure, component of the signal peptidase complex (SPC) composed of a catalytic subunit SEC11 and three accessory subunits SPC1, SPC2 and SPC3. The complex induces a local thinning of the ER membrane which is used to measure the length of the signal peptide (SP) h-region of protein substrates. This ensures the selectivity of the complex towards h-regions shorter than 18-20 amino acids. SPC associates with the translocon complex.

The protein resides in the endoplasmic reticulum membrane. It catalyses the reaction Cleavage of hydrophobic, N-terminal signal or leader sequences from secreted and periplasmic proteins.. Functionally, catalytic component of the signal peptidase complex (SPC) which catalyzes the cleavage of N-terminal signal sequences from nascent proteins as they are translocated into the lumen of the endoplasmic reticulum. Specifically cleaves N-terminal signal peptides that contain a hydrophobic alpha-helix (h-region) shorter than 18-20 amino acids. In Leptosphaeria maculans (strain JN3 / isolate v23.1.3 / race Av1-4-5-6-7-8) (Blackleg fungus), this protein is Signal peptidase complex catalytic subunit SEC11 (SEC11).